Here is a 355-residue protein sequence, read N- to C-terminus: Phosphate acyltransferase (355 aa).

Belongs to the PlsX family. Homodimer. Probably interacts with PlsY.

The protein resides in the cytoplasm. The catalysed reaction is a fatty acyl-[ACP] + phosphate = an acyl phosphate + holo-[ACP]. It functions in the pathway lipid metabolism; phospholipid metabolism. In terms of biological role, catalyzes the reversible formation of acyl-phosphate (acyl-PO(4)) from acyl-[acyl-carrier-protein] (acyl-ACP). This enzyme utilizes acyl-ACP as fatty acyl donor, but not acyl-CoA. The protein is Phosphate acyltransferase of Azorhizobium caulinodans (strain ATCC 43989 / DSM 5975 / JCM 20966 / LMG 6465 / NBRC 14845 / NCIMB 13405 / ORS 571).